A 359-amino-acid chain; its full sequence is Cytosolic sulfotransferase 15 (359 aa).

101-106 is a binding site for 3'-phosphoadenylyl sulfate; that stretch reads KSGTTW. His168 serves as the catalytic Proton acceptor. Residues Arg190, Ser198, Tyr256, and 322–324 each bind 3'-phosphoadenylyl sulfate; that span reads RKG.

The protein belongs to the sulfotransferase 1 family. In terms of tissue distribution, expressed in leaves.

The protein localises to the cytoplasm. The catalysed reaction is a 12-hydroxyjasmonate + 3'-phosphoadenylyl sulfate = a 12-sulfojasmonate + adenosine 3',5'-bisphosphate + H(+). Its function is as follows. Sulfotransferase that utilizes 3'-phospho-5'-adenylyl sulfate (PAPS) as sulfonate donor to specifically catalyze the sulfate conjugation of hydroxyjasmonates, with a preference for 12-hydroxyjasmonate over 11-hydroxyjasmonate. No activity with 12-hydroxyjasmonic acid methyl ester, cucurbic acid, 7-iso-cucurbic acid, 6-epi-cucurbic acid, 6-epi-7-iso-cucurbic acid and their methyl esters, prostaglandin E2, arachidonyl alcohol and 11-eicosenol. The polypeptide is Cytosolic sulfotransferase 15 (SOT15) (Arabidopsis thaliana (Mouse-ear cress)).